The sequence spans 354 residues: Probable RNA methyltransferase AZOSEA28700 (354 aa).

The active-site Proton acceptor is the Glu-88. The Radical SAM core domain maps to Leu-91–Asp-317. A disulfide bridge connects residues Cys-98 and Cys-322. [4Fe-4S] cluster contacts are provided by Cys-105, Cys-109, and Cys-112. S-adenosyl-L-methionine is bound by residues Gly-150–Glu-151, Ser-180, Ser-203–His-205, and Asn-279. Cys-322 serves as the catalytic S-methylcysteine intermediate.

This sequence belongs to the radical SAM superfamily. RlmN family. The cofactor is [4Fe-4S] cluster.

It localises to the cytoplasm. This is Probable RNA methyltransferase AZOSEA28700 from Aromatoleum aromaticum (strain DSM 19018 / LMG 30748 / EbN1) (Azoarcus sp. (strain EbN1)).